Consider the following 821-residue polypeptide: Calpain-3 (821 aa).

The interval 1–37 (MPTVISPTVAPRTGAEPRSPGPVPHPAQGKTTEAGGG) is disordered. The Calpain catalytic domain occupies 74–417 (LYLDPEFPPD…FTKLEICNLT (344 aa)). Catalysis depends on residues Cys-129, His-334, and Asn-358. A domain III region spans residues 418–586 (ADALESDKLQ…KRNLSEEAEN (169 aa)). The linker stretch occupies residues 587-649 (TISVDRPVKK…RPGHTDQESE (63 aa)). Positions 603 to 651 (IFVSDRANSNKELGVDQEAEEGKDKTGPDKQGESPQPRPGHTDQESEEQ) are disordered. Basic and acidic residues predominate over residues 622-634 (EEGKDKTGPDKQG). EF-hand domains lie at 649-683 (EEQQ…VVNK), 692-725 (FTLE…KKIK), 722-757 (KKIK…AGFH), and 787-821 (VRLE…TMYA). Residues 650-820 (EQQQFRNIFR…VLEWLQLTMY (171 aa)) form a domain IV region. Ca(2+) contacts are provided by Ala-662, Asp-665, Glu-667, Glu-672, Asp-705, Asp-707, Ser-709, Arg-711, Glu-716, Asp-735, Asp-737, Ser-739, Thr-741, Glu-746, Asp-800, Asp-802, Asp-804, and Ile-806.

It belongs to the peptidase C2 family. Homodimer; via EF-hand domain 4. Interacts with TTN/titin. Interacts with CMYA5; this interaction, which results in CMYA5 proteolysis, may protect CAPN3 from autolysis. Interacts with SIMC1. Interacts with UTP25; the interaction is required for CAPN3 translocation to the nucleolus. Skeletal muscle.

Its subcellular location is the cytoplasm. The protein localises to the nucleus. It localises to the nucleolus. The enzyme catalyses Broad endopeptidase activity.. Activated by micromolar concentrations of calcium and inhibited by calpastatin. Calcium-regulated non-lysosomal thiol-protease. Proteolytically cleaves CTBP1 at 'His-399'. Mediates, with UTP25, the proteasome-independent degradation of p53/TP53. The chain is Calpain-3 (Capn3) from Rattus norvegicus (Rat).